The following is a 501-amino-acid chain: Protein disulfide isomerase-like 1-1 (501 aa).

The signal sequence occupies residues 1-23 (MAMRGFTLFSILVLSLCASSIRS). Residues 24 to 141 (EETETKEFVL…IVTYLKKQSG (118 aa)) enclose the Thioredoxin 1 domain. Asn-39 carries N-linked (GlcNAc...) asparagine glycosylation. Residues Cys-59 and Cys-62 each act as nucleophile in the active site. Residues Cys-59 and Cys-62 are joined by a disulfide bond. Asn-275 carries N-linked (GlcNAc...) asparagine glycosylation. Residues 354–482 (FKDGKIAPHK…FISFVDKNKD (129 aa)) enclose the Thioredoxin 2 domain. Catalysis depends on nucleophile residues Cys-404 and Cys-407. Cysteines 404 and 407 form a disulfide. The short motif at 498 to 501 (KDEL) is the Prevents secretion from ER element.

This sequence belongs to the protein disulfide isomerase family. As to quaternary structure, interacts with RD21A, At3g19390, At5g43060. As to expression, highly expressed in flowers, stems and immature seeds, and at lower levels in leaves and siliques (at protein level).

It is found in the endoplasmic reticulum lumen. The protein localises to the vacuole. The enzyme catalyses Catalyzes the rearrangement of -S-S- bonds in proteins.. Functionally, protein disulfide isomerase that associates with RD21A protease for trafficking from the ER through the Golgi to lytic and protein storage vacuoles of endothelial cells in developing seeds. Regulates the timing of programmed cell death (PCD) of the endothelial cells by chaperoning and inhibiting cysteine proteases during their trafficking to vacuoles. This Arabidopsis thaliana (Mouse-ear cress) protein is Protein disulfide isomerase-like 1-1 (PDIL1-1).